Consider the following 231-residue polypeptide: Ribose-5-phosphate isomerase A (231 aa).

Substrate-binding positions include threonine 32–threonine 35, aspartate 85–aspartate 88, and lysine 98–glycine 101. The active-site Proton acceptor is the glutamate 107. A substrate-binding site is contributed by lysine 125.

The protein belongs to the ribose 5-phosphate isomerase family. In terms of assembly, homodimer.

The catalysed reaction is aldehydo-D-ribose 5-phosphate = D-ribulose 5-phosphate. It participates in carbohydrate degradation; pentose phosphate pathway; D-ribose 5-phosphate from D-ribulose 5-phosphate (non-oxidative stage): step 1/1. In terms of biological role, catalyzes the reversible conversion of ribose-5-phosphate to ribulose 5-phosphate. The sequence is that of Ribose-5-phosphate isomerase A from Paraburkholderia xenovorans (strain LB400).